The primary structure comprises 376 residues: Phytanoyl-CoA hydroxylase-interacting protein-like (376 aa).

Positions 52 to 161 (VPHNIKISNI…EIIEFCTADY (110 aa)) constitute a Fibronectin type-III domain.

Belongs to the PHYHIP family.

In terms of biological role, may play a role in the development of the central system. This chain is Phytanoyl-CoA hydroxylase-interacting protein-like (phyhipl), found in Xenopus laevis (African clawed frog).